Consider the following 584-residue polypeptide: MRSNYCTELDSGDIGKIVDVCGWVNSYRDHGGVIFIDLRDRSGLIQLVCDPKHSQEAYTIANSVRDEFVLRAHGKIRARGKDLINPKLKTGEIEVVVENLIVENPSKPLPFVIGDKNVSEETRLKYRFLDLRTNENFNKFFTRSKAAIAARNALDRLGFVEVETPILTRATPEGARDYLVPSRVYNGQFYALPQSPQLFKQLLMCSCFDKYFQIARCFRDEDLRADRQPEFTQIDIEMSFCDQKDVMKVGEAVLKDIFKSCGKDIKTPFRVMQYKDAMENYGSDKPDLRFGMKFIDVADIFEKSSNEIFANIAKDKKKNRVKAIKVEGGDLKFSKRQMQRFEEYVRKFGAQGLAFIQVKEEGLKGPLVKFFEKSEIDELVKRCELKVGDVVFFGAGKKKIVLDYMGRFRIFLANELELINPDALEFLWVVDFPMFEQNEDGTYSAMHHPFTMPNNVDEPDIEEITSIAYDVVLNGIELGGGSIRIHKEDIQEKVFKLLKIEPAEQREKFGFLLDALSFGAPPHGGIAIGFDRLMMLVTRSSSIRDVIAFPKTQRAQCLLTKAPSGISNEQLRELGLKINKKEQK.

Glu-173 serves as a coordination point for L-aspartate. Residues Gln-197–Lys-200 are aspartate. Arg-219 serves as a coordination point for L-aspartate. ATP contacts are provided by residues Arg-219–Glu-221 and Gln-228. His-447 lines the L-aspartate pocket. An ATP-binding site is contributed by Glu-477. Arg-484 is a binding site for L-aspartate. Residue Gly-529 to Arg-532 coordinates ATP.

This sequence belongs to the class-II aminoacyl-tRNA synthetase family. Type 1 subfamily. In terms of assembly, homodimer.

It localises to the cytoplasm. The catalysed reaction is tRNA(Asx) + L-aspartate + ATP = L-aspartyl-tRNA(Asx) + AMP + diphosphate. Aspartyl-tRNA synthetase with relaxed tRNA specificity since it is able to aspartylate not only its cognate tRNA(Asp) but also tRNA(Asn). Reaction proceeds in two steps: L-aspartate is first activated by ATP to form Asp-AMP and then transferred to the acceptor end of tRNA(Asp/Asn). The sequence is that of Aspartate--tRNA(Asp/Asn) ligase from Campylobacter hominis (strain ATCC BAA-381 / DSM 21671 / CCUG 45161 / LMG 19568 / NCTC 13146 / CH001A).